The sequence spans 426 residues: Phosphomethylpyrimidine synthase (426 aa).

Substrate-binding positions include Asn-65, Met-94, Tyr-123, His-162, 184–186 (SRG), 225–228 (DGMR), and Glu-264. His-268 contacts Zn(2+). Substrate is bound at residue Tyr-291. His-332 lines the Zn(2+) pocket. 3 residues coordinate [4Fe-4S] cluster: Cys-408, Cys-411, and Cys-415.

This sequence belongs to the ThiC family. The cofactor is [4Fe-4S] cluster.

The catalysed reaction is 5-amino-1-(5-phospho-beta-D-ribosyl)imidazole + S-adenosyl-L-methionine = 4-amino-2-methyl-5-(phosphooxymethyl)pyrimidine + CO + 5'-deoxyadenosine + formate + L-methionine + 3 H(+). Its pathway is cofactor biosynthesis; thiamine diphosphate biosynthesis. Catalyzes the synthesis of the hydroxymethylpyrimidine phosphate (HMP-P) moiety of thiamine from aminoimidazole ribotide (AIR) in a radical S-adenosyl-L-methionine (SAM)-dependent reaction. The sequence is that of Phosphomethylpyrimidine synthase from Methanococcus vannielii (strain ATCC 35089 / DSM 1224 / JCM 13029 / OCM 148 / SB).